The primary structure comprises 88 residues: Phosphocarrier protein HPr (88 aa).

In terms of domain architecture, HPr spans 1 to 88 (MEKRDFHVVA…ETMKKEGLSE (88 aa)). H15 acts as the Pros-phosphohistidine intermediate in catalysis. S46 bears the Phosphoserine; by HPrK/P mark.

It belongs to the HPr family.

The protein resides in the cytoplasm. Phosphorylation on Ser-46 inhibits the phosphoryl transfer from enzyme I to HPr. Functionally, general (non sugar-specific) component of the phosphoenolpyruvate-dependent sugar phosphotransferase system (sugar PTS). This major carbohydrate active-transport system catalyzes the phosphorylation of incoming sugar substrates concomitantly with their translocation across the cell membrane. The phosphoryl group from phosphoenolpyruvate (PEP) is transferred to the phosphoryl carrier protein HPr by enzyme I. Phospho-HPr then transfers it to the PTS EIIA domain. P-Ser-HPr interacts with the catabolite control protein A (CcpA), forming a complex that binds to DNA at the catabolite response elements cre, operator sites preceding a large number of catabolite-regulated genes. Thus, P-Ser-HPr is a corepressor in carbon catabolite repression (CCR), a mechanism that allows bacteria to coordinate and optimize the utilization of available carbon sources. P-Ser-HPr also plays a role in inducer exclusion, in which it probably interacts with several non-PTS permeases and inhibits their transport activity. This Latilactobacillus sakei (Lactobacillus sakei) protein is Phosphocarrier protein HPr (ptsH).